The following is a 124-amino-acid chain: Ribonuclease pancreatic (124 aa).

The substrate site is built by Lys7 and Arg10. Catalysis depends on His12, which acts as the Proton acceptor. Disulfide bonds link Cys26-Cys84, Cys40-Cys95, Cys58-Cys110, and Cys65-Cys72. The N-linked (GlcNAc...) asparagine; partial glycan is linked to Asn34. Substrate contacts are provided by residues 41-45 (KPVBT), Lys66, and Arg85. The Proton donor role is filled by His119.

The protein belongs to the pancreatic ribonuclease family. In terms of assembly, monomer. Interacts with and forms tight 1:1 complexes with RNH1. Dimerization of two such complexes may occur. Interaction with RNH1 inhibits this protein. Pancreas.

The protein localises to the secreted. The catalysed reaction is an [RNA] containing cytidine + H2O = an [RNA]-3'-cytidine-3'-phosphate + a 5'-hydroxy-ribonucleotide-3'-[RNA].. It catalyses the reaction an [RNA] containing uridine + H2O = an [RNA]-3'-uridine-3'-phosphate + a 5'-hydroxy-ribonucleotide-3'-[RNA].. Its function is as follows. Endonuclease that catalyzes the cleavage of RNA on the 3' side of pyrimidine nucleotides. Acts on single-stranded and double-stranded RNA. The sequence is that of Ribonuclease pancreatic (RNASE1) from Damaliscus korrigum (Topi).